The chain runs to 1439 residues: ABC transporter G family member 14 (1439 aa).

Positions 1-17 are enriched in basic and acidic residues; it reads MEENSNKFEQELKEIGQ. The interval 1–21 is disordered; the sequence is MEENSNKFEQELKEIGQDRNQ. Positions 117–370 constitute an ABC transporter 1 domain; the sequence is FSILNFFKPS…FMSLGFDCEP (254 aa). An ABC transmembrane type-2 1 domain is found at 475 to 700; sequence LNDKFGLFTK…GSEFDAYRIC (226 aa). Transmembrane regions (helical) follow at residues 479-499, 516-536, 564-584, 589-609, 614-634, and 734-754; these read FGLF…SSVF, ILSA…MTFI, IPFT…MFGL, GKFF…TALF, YLCP…IFML, and IIVY…MEYI. An ABC transporter 2 domain is found at 805–1049; it reads FTWQNIRYTV…LTSYFERHGV (245 aa). 841–848 provides a ligand contact to ATP; that stretch reads GSSGAGKT. Positions 1141–1366 constitute an ABC transmembrane type-2 2 domain; sequence YYTYGSFVQS…YNTCQNYTSA (226 aa). 6 helical membrane-spanning segments follow: residues 1144-1164, 1175-1195, 1217-1237, 1256-1276, 1283-1303, and 1413-1433; these read YGSF…FWNL, IFFI…VMPQ, FAIS…TIFF, FYFW…GQAV, MFFA…FSGV, and VGII…FVYL.

It belongs to the ABC transporter superfamily. ABCG family. PDR (TC 3.A.1.205) subfamily.

Its subcellular location is the membrane. The polypeptide is ABC transporter G family member 14 (abcG14) (Dictyostelium discoideum (Social amoeba)).